The chain runs to 132 residues: Small ribosomal subunit protein eS6 (132 aa).

Belongs to the eukaryotic ribosomal protein eS6 family.

The polypeptide is Small ribosomal subunit protein eS6 (Methanoculleus marisnigri (strain ATCC 35101 / DSM 1498 / JR1)).